Reading from the N-terminus, the 706-residue chain is Zinc finger CCCH domain-containing protein 56 (706 aa).

ANK repeat units lie at residues 83–113 and 118–150; these read EQRT…ELNL and DKST…DPNI. A compositionally biased stretch (low complexity) spans 211-221; it reads SSLLSLDSVSS. Positions 211-235 are disordered; the sequence is SSLLSLDSVSSPTKPHGTDVTFASE. 2 C3H1-type zinc fingers span residues 302–324 and 332–356; these read PCPD…HGVF and QYRT…HANE. Disordered stretches follow at residues 396-427, 545-616, and 652-692; these read PSAA…QQNI, SPKN…QTHG, and QMLK…TRES. 2 stretches are compositionally biased toward polar residues: residues 397 to 427 and 545 to 560; these read SAAQ…QQNI and SPKN…QASS. The residue at position 568 (Ser568) is a Phosphoserine. A compositionally biased stretch (low complexity) spans 580 to 592; it reads SRSLSSRDFGSSL. Composition is skewed to polar residues over residues 600–616, 652–667, and 677–686; these read DSGS…QTHG, QMLK…NRVV, and QGGSSVNPHN.

This is Zinc finger CCCH domain-containing protein 56 from Arabidopsis thaliana (Mouse-ear cress).